A 209-amino-acid polypeptide reads, in one-letter code: Probable endopeptidase Cgl2188 (209 aa).

Residues 1–35 form the signal peptide; it reads MGKHRRNNSNATRKAVAASAVALGATAAIASPAQA. Residues 95-209 form the NlpC/P60 domain; the sequence is ASTGQAIVDA…YMPFHSAVRF (115 aa). Cysteine 125 serves as the catalytic Nucleophile. The Proton acceptor role is filled by histidine 173. The active site involves histidine 185.

Belongs to the peptidase C40 family.

Its subcellular location is the secreted. In Corynebacterium glutamicum (strain ATCC 13032 / DSM 20300 / JCM 1318 / BCRC 11384 / CCUG 27702 / LMG 3730 / NBRC 12168 / NCIMB 10025 / NRRL B-2784 / 534), this protein is Probable endopeptidase Cgl2188.